Reading from the N-terminus, the 241-residue chain is Demethylmenaquinone methyltransferase (241 aa).

S-adenosyl-L-methionine contacts are provided by residues Thr-60, Asp-81, and 106-107; that span reads DA.

Belongs to the class I-like SAM-binding methyltransferase superfamily. MenG/UbiE family.

The catalysed reaction is a 2-demethylmenaquinol + S-adenosyl-L-methionine = a menaquinol + S-adenosyl-L-homocysteine + H(+). The protein operates within quinol/quinone metabolism; menaquinone biosynthesis; menaquinol from 1,4-dihydroxy-2-naphthoate: step 2/2. Methyltransferase required for the conversion of demethylmenaquinol (DMKH2) to menaquinol (MKH2). This is Demethylmenaquinone methyltransferase from Staphylococcus aureus (strain Mu3 / ATCC 700698).